The following is a 163-amino-acid chain: uncharacterized protein (163 aa).

The Cytoplasmic portion of the chain corresponds to 1-33 (MKTLDKITNYDLFDFADEFLKFVPVFRPNPTVT). The chain crosses the membrane as a helical span at residues 34–54 (CLFGNPLTNLLVNGTGAACFF). At 55–117 (EFCSLALIKV…SLGMALPDDD (63 aa)) the chain is on the extracellular side. A helical membrane pass occupies residues 118-138 (VLLSITFWFLCNSSFSILFVF). Residues 139–163 (ELRIFLRTVNNLLVVFLSVLKRNDL) lie on the Cytoplasmic side of the membrane.

The protein localises to the membrane. This is an uncharacterized protein from Saccharomyces cerevisiae (strain ATCC 204508 / S288c) (Baker's yeast).